The chain runs to 134 residues: uncharacterized protein (134 aa).

Positions Lys-10 to Leu-70 constitute an HTH tetR-type domain. Residues Thr-33 to Phe-52 constitute a DNA-binding region (H-T-H motif).

Unknown, does not seem to be involved in regulation of the ttgGHI or ttgVW operons. This is an uncharacterized protein from Pseudomonas putida (strain DOT-T1E).